The chain runs to 412 residues: Argininosuccinate synthase (412 aa).

10–18 (AYSGGLDTS) is a binding site for ATP. Tyr89 is a binding site for L-citrulline. Gly119 contributes to the ATP binding site. L-aspartate is bound by residues Thr121, Asn125, and Asp126. Position 125 (Asn125) interacts with L-citrulline. Arg129, Ser177, Glu261, and Tyr273 together coordinate L-citrulline.

It belongs to the argininosuccinate synthase family. Type 1 subfamily. In terms of assembly, homotetramer.

The protein resides in the cytoplasm. It carries out the reaction L-citrulline + L-aspartate + ATP = 2-(N(omega)-L-arginino)succinate + AMP + diphosphate + H(+). The protein operates within amino-acid biosynthesis; L-arginine biosynthesis; L-arginine from L-ornithine and carbamoyl phosphate: step 2/3. This is Argininosuccinate synthase from Bifidobacterium longum (strain DJO10A).